Reading from the N-terminus, the 342-residue chain is P2Y purinoceptor 12 (342 aa).

Topologically, residues 1–27 are extracellular; that stretch reads MQAIDNLTSAPGNTSLCTRDYKITQVL. N-linked (GlcNAc...) asparagine glycosylation is found at asparagine 6 and asparagine 13. Disulfide bonds link cysteine 17-cysteine 270 and cysteine 97-cysteine 175. Residues 28-50 form a helical membrane-spanning segment; the sequence is FPLLYTVLFFVGLITNSLAMRIF. The Cytoplasmic segment spans residues 51 to 61; the sequence is FQIRSKSNFII. Phosphoserine is present on residues serine 55 and serine 57. A helical transmembrane segment spans residues 62–82; it reads FLKNTVISDLLMILTFPFKIL. Residues 83–97 are Extracellular-facing; the sequence is SDAKLGAGPLRTFVC. ADP is bound by residues arginine 93, cysteine 97, and tyrosine 105. Residues 98-118 traverse the membrane as a helical segment; the sequence is QVTSVIFYFTMYISISFLGLI. The Cytoplasmic segment spans residues 119–142; sequence TIDRYQKTTRPFKTSNPKNLLGAK. Residues 143-162 traverse the membrane as a helical segment; that stretch reads ILSVLIWAFMFLLSLPNMIL. Residues 156 to 159, 175 to 179, histidine 187, and asparagine 191 contribute to the ADP site; these read SLPN and CSFLK. Residues 163-185 lie on the Extracellular side of the membrane; it reads TNRRPRDKNVKKCSFLKSEFGLV. Residues 186 to 207 traverse the membrane as a helical segment; it reads WHEIVNYICQVIFWINFLIVIV. The Cytoplasmic portion of the chain corresponds to 208–233; sequence CYTLITKELYRSYVRTRGVGKVPRKK. The chain crosses the membrane as a helical span at residues 234–259; the sequence is VNVKVFIIIAVFFICFVPFHFARIPY. Residues 256 to 259, glutamine 263, and lysine 280 each bind ADP; that span reads RIPY. At 260-278 the chain is on the extracellular side; that stretch reads TLSQTRDVFDCAAENTLFY. The chain crosses the membrane as a helical span at residues 279-298; it reads VKESTLWLTSLNACLDPFIY. At 299–342 the chain is on the cytoplasmic side; the sequence is FFLCKSFRNSLISMLKCPNSATSQSQDNRKKEQDGGDPNEETPM. The disordered stretch occupies residues 317–342; it reads NSATSQSQDNRKKEQDGGDPNEETPM. The span at 333-342 shows a compositional bias: acidic residues; sequence GGDPNEETPM.

The protein belongs to the G-protein coupled receptor 1 family.

It localises to the cell membrane. Its function is as follows. Receptor for ADP and ATP coupled to G-proteins that inhibit the adenylyl cyclase second messenger system. Required for normal platelet aggregation and blood coagulation. This is P2Y purinoceptor 12 (P2RY12) from Macaca fascicularis (Crab-eating macaque).